Here is a 263-residue protein sequence, read N- to C-terminus: Bradykinin-potentiating and C-type natriuretic peptides (263 aa).

A signal peptide spans 1 to 23 (MFVSRLAASGLLLLALMALSLDG). Residues 24 to 30 (KPVQQWS) constitute a propeptide that is removed on maturation. Gln-31 is subject to Pyrrolidone carboxylic acid. Residues 42–48 (LVVQQWS) constitute a propeptide that is removed on maturation. Gln-49 is subject to Pyrrolidone carboxylic acid. Residues 60-66 (LVVQQWS) constitute a propeptide that is removed on maturation. Gln-67 is modified (pyrrolidone carboxylic acid). The propeptide occupies 78–84 (LVVQQWS). Gln-85 is modified (pyrrolidone carboxylic acid). The angiotensin-converting enzyme active site binding stretch occupies residues 89–95 (PRPKIPP). Residues 96–102 (LVVQQWS) constitute a propeptide that is removed on maturation. Residue Gln-103 is modified to Pyrrolidone carboxylic acid. The angiotensin-converting enzyme active site binding stretch occupies residues 107–113 (PRPKIPP). Positions 114-116 (LVV) are excised as a propeptide. Pyrrolidone carboxylic acid is present on Gln-117. Positions 128–130 (LLL) are excised as a propeptide. Gln-131 carries the pyrrolidone carboxylic acid modification. The propeptide occupies 137–241 (AGGTTALREE…ARRLKGLVKK (105 aa)). Disordered stretches follow at residues 152–171 (EAAS…GSKA) and 177–205 (RLSK…GKQA). Over residues 181-192 (SKGASATSASAS) the composition is skewed to low complexity. Basic and acidic residues predominate over residues 194 to 204 (PMRDLRTDGKQ). An intrachain disulfide couples Cys-247 to Cys-263.

The protein in the N-terminal section; belongs to the bradykinin-potentiating peptide family. It in the C-terminal section; belongs to the natriuretic peptide family. In terms of tissue distribution, expressed by the venom gland.

The protein resides in the secreted. Its function is as follows. Inhibits the rabbit lung angiotensin-converting enzyme (ACE) (IC(50)=15 uM). Contracts the rat gastric fundus smooth muscle in a rapid and transient manner. Functionally, causes no contraction of the rat gastric fundus smooth muscle even at high concentrations. Causes very weak contraction of the isolated guinea pig ileum. Causes weak contraction on rat uterus. Inhibits the activity of the angiotensin-converting enzyme (ACE) by a preferential interaction with its C-domain (Ki=30 nM, IC(50)=1.1 uM). It binds ACE in a zinc-independent manner. Also potentiates the hypotensive effects of bradykinin. Causes high contraction of the isolated guinea pig ileum and weak contraction on rat uterus. In terms of biological role, inhibits the activity of the angiotensin-converting enzyme (ACE) by interacting with the same potency to its C- and N-domains. Inhibits the rabbit lung angiotensin-converting enzyme (ACE) (IC(50)=7.1 uM). Causes weak contraction of the isolated guinea pig ileum. Causes weak contraction on rat uterus. Its function is as follows. Inhibits the rabbit lung angiotensin-converting enzyme (ACE) (IC(50)=46 uM). Synthetic Leu3-blomhotin contracts the rat gastric fundus smooth muscle in a rapid and transient manner. Causes moderate contraction of the isolated guinea pig ileum. Causes weak contraction on rat uterus. Functionally, causes weak contraction of the isolated guinea pig ileum. Causes about 50-fold more potentiating activity on rat uterus than on guinea pig ileum. Synthetic peptide potentiates the bradykinin in vivo. In terms of biological role, synthetic peptide does not show any bradykinin-potentiating effects. Its function is as follows. has a vasorelaxant activity in rat aortic strips and a diuretic potency in anesthetized rats. May act by activating natriuretic receptors (NPR1 and/or NPR2). In Gloydius blomhoffii (Mamushi), this protein is Bradykinin-potentiating and C-type natriuretic peptides.